A 385-amino-acid chain; its full sequence is MNIWAPAPEPPTKLGRHRQLAPGCGLHVSPIQLGAMSIGDKWHPYGMGTMDKEASFKLLDAFYNAGGNFIDTANVYQDETSEEFIGEWMEARGNRDQMVVATKYSLVYKRGASFEEIPQKTQYVGNSLKSMHISVHDSLRKLRTSYIDIFYVHFWDYTCTIEEVMNGLHNLVAQGKVLYLGVSDTPAWVVSKANNYARMAGKTPFVIYEGEWNITMRDMERDIIPMCIHEGMAIAPWNVLCAGKIRTDAEEERRLKSGEGGRTLLQFDGWLRNETERKVSKALEKVAEEIGAKSITSVAIAYLMQKFPYVFPIVGGRKVEHLYANLEALDISLSPEQMQFLNDTVPFNKGFPYLLFGDGSDYNIVHKAAGHYDKWPAQQAIRPQK.

The active-site Proton donor is the tyrosine 76. An NADP(+)-binding site is contributed by 238–248; it reads NVLCAGKIRTD.

It belongs to the aldo/keto reductase family. Aldo/keto reductase 2 subfamily. Post-translationally, the N-terminus is blocked.

The catalysed reaction is an aromatic primary alcohol + NADP(+) = an aromatic aldehyde + NADPH + H(+). This chain is Aryl-alcohol dehydrogenase [NADP(+)], found in Phanerodontia chrysosporium (White-rot fungus).